We begin with the raw amino-acid sequence, 161 residues long: Nucleotide-binding protein Pnuc_0290 (161 aa).

This sequence belongs to the YajQ family.

Functionally, nucleotide-binding protein. This is Nucleotide-binding protein Pnuc_0290 from Polynucleobacter asymbioticus (strain DSM 18221 / CIP 109841 / QLW-P1DMWA-1) (Polynucleobacter necessarius subsp. asymbioticus).